The following is a 1291-amino-acid chain: Vigilin 1 (1291 aa).

The span at Met-1–Lys-39 shows a compositional bias: polar residues. Disordered regions lie at residues Met-1 to Gly-45 and His-70 to Ile-91. Residues Ala-73 to Lys-88 are compositionally biased toward low complexity. Ser-115 bears the Phosphoserine mark. The segment at Thr-124–Thr-148 is disordered. KH domains lie at Ile-166 to Ile-229, Arg-236 to Ile-328, Thr-339 to Leu-405, Thr-416 to Ile-486, Ser-575 to Leu-644, Ile-658 to Ile-726, Ser-741 to Ile-798, Asp-808 to Leu-883, Ala-894 to Ile-957, Leu-967 to Leu-1040, Gln-1050 to Ile-1114, and Asn-1219 to Ile-1280. The tract at residues Thr-266 to Leu-303 is disordered. Residues Thr-268 to Glu-281 are compositionally biased toward polar residues. Over residues Asp-284–Asn-294 the composition is skewed to basic and acidic residues. The tract at residues Pro-845–Asp-865 is disordered. Ser-934 is modified (phosphoserine). Position 935 is a phosphothreonine (Thr-935).

The protein resides in the endoplasmic reticulum. It localises to the cytoplasm. Its function is as follows. Required for cell survival under thermal stress. The sequence is that of Vigilin 1 (vgl1) from Schizosaccharomyces pombe (strain 972 / ATCC 24843) (Fission yeast).